Consider the following 477-residue polypeptide: Ankyrin repeat, SAM and basic leucine zipper domain-containing protein 1 (477 aa).

Phosphoserine occurs at positions 17, 18, and 20. ANK repeat units lie at residues 46 to 76 (EKKE…SVDA), 80 to 109 (YGWT…NASF), 112 to 146 (DKQT…DPNV), 150 to 179 (RLMT…EVNT), 183 to 212 (NGYT…NKML), and 216 to 245 (DGKL…PLEG). An SAM domain is found at 274–336 (SYAAFGDLEV…KILAALKELE (63 aa)).

As to quaternary structure, interacts with DDX4, PIWIL1, RANBP9 and TDRD1.

Its subcellular location is the cytoplasm. Its function is as follows. Plays a central role during spermatogenesis by repressing transposable elements and preventing their mobilization, which is essential for the germline integrity. Acts via the piRNA metabolic process, which mediates the repression of transposable elements during meiosis by forming complexes composed of piRNAs and Piwi proteins and governs the methylation and subsequent repression of transposons. Its association with pi-bodies suggests a participation in the primary piRNAs metabolic process. Required prior to the pachytene stage to facilitate the production of multiple types of piRNAs, including those associated with repeats involved in the regulation of retrotransposons. May act by mediating protein-protein interactions during germ cell maturation. The protein is Ankyrin repeat, SAM and basic leucine zipper domain-containing protein 1 (ASZ1) of Callithrix jacchus (White-tufted-ear marmoset).